The sequence spans 218 residues: Histone H1.1 (218 aa).

The disordered stretch occupies residues 1 to 42; that stretch reads MSEVALPAPAASTSPEKPSAGKKAKKPAKAAAAAKKKPAGPS. Residue Ser-2 is modified to N-acetylserine. A phosphoserine mark is found at Ser-2 and Ser-12. N6-acetyllysine is present on Lys-17. A compositionally biased stretch (basic residues) spans 20–38; the sequence is AGKKAKKPAKAAAAAKKKP. Lys-37 is modified (N6-(beta-hydroxybutyryl)lysine). Positions 39-112 constitute an H15 domain; it reads AGPSVSELIV…GASGSFKLNK (74 aa). Phosphoserine is present on Ser-44. Lys-55 carries the N6-(beta-hydroxybutyryl)lysine modification. Arg-57 is subject to Citrulline. An N6-(beta-hydroxybutyryl)lysine modification is found at Lys-67. Lys-78 is modified (N6-acetyllysine). Lys-88 bears the N6-(beta-hydroxybutyryl)lysine mark. The residue at position 93 (Lys-93) is an N6-(beta-hydroxybutyryl)lysine; alternate. Lys-93 is modified (N6-acetyllysine; alternate). Position 107 is a phosphoserine; by PKC (Ser-107). Position 109 is an N6-(beta-hydroxybutyryl)lysine (Lys-109). Residues 116-218 are disordered; the sequence is SVDAKPTATK…KPKKAAPKKK (103 aa). A compositionally biased stretch (low complexity) spans 119–149; the sequence is AKPTATKVATKTKVTSASKKPKKASGAAAAK. At Lys-125 the chain carries N6-acetyllysine. 2 stretches are compositionally biased toward basic residues: residues 150 to 183 and 190 to 218; these read KSVKTPKKARKSVLTKKSSKSPKKPKAVKPKKVA and KAVKPKGAKVKVTKPKTAAKPKKAAPKKK. Thr-206 carries the phosphothreonine modification.

The protein belongs to the histone H1/H5 family. In terms of assembly, interacts with DFFB. H1 histones are progressively phosphorylated during the cell cycle, becoming maximally phosphorylated during late G2 phase and M phase, and being dephosphorylated sharply thereafter. Post-translationally, citrullination at Arg-57 (H1R54ci) by PADI4 takes place within the DNA-binding site of H1 and results in its displacement from chromatin and global chromatin decondensation, thereby promoting pluripotency and stem cell maintenance.

The protein localises to the nucleus. The protein resides in the chromosome. In terms of biological role, H1 histones bind to linker DNA between nucleosomes forming the macromolecular structure known as the chromatin fiber. H1 histones are necessary for the condensation of nucleosome chains into higher-order structured fibers. Also acts as a regulator of individual gene transcription through chromatin remodeling. This is Histone H1.1 from Bos taurus (Bovine).